A 176-amino-acid polypeptide reads, in one-letter code: Endoribonuclease YbeY (176 aa).

Residues His-139, His-143, and His-149 each contribute to the Zn(2+) site.

This sequence belongs to the endoribonuclease YbeY family. Zn(2+) is required as a cofactor.

It is found in the cytoplasm. Functionally, single strand-specific metallo-endoribonuclease involved in late-stage 70S ribosome quality control and in maturation of the 3' terminus of the 16S rRNA. In Acaryochloris marina (strain MBIC 11017), this protein is Endoribonuclease YbeY.